Consider the following 273-residue polypeptide: uncharacterized protein (273 aa).

This sequence belongs to the PhyH family.

This is an uncharacterized protein from Mycobacterium tuberculosis (strain ATCC 25618 / H37Rv).